Here is a 357-residue protein sequence, read N- to C-terminus: tRNA-specific 2-thiouridylase MnmA (357 aa).

Residues 7-14 (GMSGGVDS) and M33 each bind ATP. C103 (nucleophile) is an active-site residue. Cysteines 103 and 200 form a disulfide. G127 is a binding site for ATP. Positions 150–152 (KDQ) are interaction with tRNA. Residue C200 is the Cysteine persulfide intermediate of the active site. Residues 306-307 (RY) are interaction with tRNA.

It belongs to the MnmA/TRMU family.

It is found in the cytoplasm. It carries out the reaction S-sulfanyl-L-cysteinyl-[protein] + uridine(34) in tRNA + AH2 + ATP = 2-thiouridine(34) in tRNA + L-cysteinyl-[protein] + A + AMP + diphosphate + H(+). Functionally, catalyzes the 2-thiolation of uridine at the wobble position (U34) of tRNA, leading to the formation of s(2)U34. The chain is tRNA-specific 2-thiouridylase MnmA from Lachnoclostridium phytofermentans (strain ATCC 700394 / DSM 18823 / ISDg) (Clostridium phytofermentans).